A 189-amino-acid polypeptide reads, in one-letter code: MLTKALILFGLLALAQGYSFTSREVKCHVCKAVVTELEEAIAKEDPHKMADVSGFRLDAQGNSISKKVRLVKSEMFLTELMEKICEKMDDYLKATYKSNGKFTLLKMIINGQMNPDSSLVDFVQDGDLNKSLGHFCNEVLEDNDEIFVKAFQAEELGNDLDIKICSEQASYCDESPVQEEYDFDGKEEL.

Residues 1-17 (MLTKALILFGLLALAQG) form the signal peptide. One can recognise a Saposin B-type domain in the interval 23-176 (REVKCHVCKA…EQASYCDESP (154 aa)). Disulfide bonds link cysteine 27–cysteine 172, cysteine 30–cysteine 165, and cysteine 85–cysteine 136. The Prevents secretion from ER signature appears at 186 to 189 (KEEL).

The protein belongs to the canopy family.

It is found in the endoplasmic reticulum. Its function is as follows. Involved in embryonic dorsal-ventral patterning which is generated by a series of serine protease processing events where gd processes snk which cleaves ea which then processes spz into the activating ligand for the Toll receptor. Required during this process for the secretion of ea from the developing embryo into the perivitelline space and for ea processing. The polypeptide is Protein seele (Drosophila melanogaster (Fruit fly)).